Here is a 179-residue protein sequence, read N- to C-terminus: Protein GrpE (179 aa).

The tract at residues 1–20 is disordered; that stretch reads MSEETKEEIKNEKVDEEVTE.

The protein belongs to the GrpE family. In terms of assembly, homodimer.

It localises to the cytoplasm. Participates actively in the response to hyperosmotic and heat shock by preventing the aggregation of stress-denatured proteins, in association with DnaK and GrpE. It is the nucleotide exchange factor for DnaK and may function as a thermosensor. Unfolded proteins bind initially to DnaJ; upon interaction with the DnaJ-bound protein, DnaK hydrolyzes its bound ATP, resulting in the formation of a stable complex. GrpE releases ADP from DnaK; ATP binding to DnaK triggers the release of the substrate protein, thus completing the reaction cycle. Several rounds of ATP-dependent interactions between DnaJ, DnaK and GrpE are required for fully efficient folding. In Lactococcus lactis subsp. cremoris (strain MG1363), this protein is Protein GrpE.